A 319-amino-acid chain; its full sequence is Acetylglutamate kinase (319 aa).

Substrate-binding positions include G74 to G75, R96, and N210.

Belongs to the acetylglutamate kinase family. ArgB subfamily.

The protein resides in the cytoplasm. The enzyme catalyses N-acetyl-L-glutamate + ATP = N-acetyl-L-glutamyl 5-phosphate + ADP. The protein operates within amino-acid biosynthesis; L-arginine biosynthesis; N(2)-acetyl-L-ornithine from L-glutamate: step 2/4. Its function is as follows. Catalyzes the ATP-dependent phosphorylation of N-acetyl-L-glutamate. This chain is Acetylglutamate kinase, found in Pseudarthrobacter chlorophenolicus (strain ATCC 700700 / DSM 12829 / CIP 107037 / JCM 12360 / KCTC 9906 / NCIMB 13794 / A6) (Arthrobacter chlorophenolicus).